Consider the following 368-residue polypeptide: Homoserine O-acetyltransferase (368 aa).

The AB hydrolase-1 domain maps to 43-346; the sequence is ILLEHALTGT…EYGHDAFLVE (304 aa). S145 serves as the catalytic Nucleophile. Position 212 (R212) interacts with substrate. Residues D307 and H340 contribute to the active site. D341 serves as a coordination point for substrate.

This sequence belongs to the AB hydrolase superfamily. MetX family. Homodimer.

It localises to the cytoplasm. The catalysed reaction is L-homoserine + acetyl-CoA = O-acetyl-L-homoserine + CoA. The protein operates within amino-acid biosynthesis; L-methionine biosynthesis via de novo pathway; O-acetyl-L-homoserine from L-homoserine: step 1/1. In terms of biological role, transfers an acetyl group from acetyl-CoA to L-homoserine, forming acetyl-L-homoserine. The sequence is that of Homoserine O-acetyltransferase from Listeria monocytogenes serovar 1/2a (strain ATCC BAA-679 / EGD-e).